The following is a 335-amino-acid chain: UPF0284 protein TON_0688 (335 aa).

The protein belongs to the UPF0284 family.

The sequence is that of UPF0284 protein TON_0688 from Thermococcus onnurineus (strain NA1).